The sequence spans 438 residues: Glutamyl-tRNA(Gln) amidotransferase subunit D (438 aa).

One can recognise an Asparaginase/glutaminase domain in the interval 92–422 (PDVTIIGTGG…EEVRRMMLTN (331 aa)). Residues Thr102, Thr178, Asp179, and Lys256 contribute to the active site.

Belongs to the asparaginase 1 family. GatD subfamily. Heterodimer of GatD and GatE.

It carries out the reaction L-glutamyl-tRNA(Gln) + L-glutamine + ATP + H2O = L-glutaminyl-tRNA(Gln) + L-glutamate + ADP + phosphate + H(+). Allows the formation of correctly charged Gln-tRNA(Gln) through the transamidation of misacylated Glu-tRNA(Gln) in organisms which lack glutaminyl-tRNA synthetase. The reaction takes place in the presence of glutamine and ATP through an activated gamma-phospho-Glu-tRNA(Gln). The GatDE system is specific for glutamate and does not act on aspartate. This is Glutamyl-tRNA(Gln) amidotransferase subunit D from Pyrococcus horikoshii (strain ATCC 700860 / DSM 12428 / JCM 9974 / NBRC 100139 / OT-3).